Reading from the N-terminus, the 249-residue chain is Probable transcriptional regulatory protein Psyc_0938 (249 aa).

Belongs to the TACO1 family.

The protein resides in the cytoplasm. The sequence is that of Probable transcriptional regulatory protein Psyc_0938 from Psychrobacter arcticus (strain DSM 17307 / VKM B-2377 / 273-4).